Reading from the N-terminus, the 375-residue chain is Succinyl-diaminopimelate desuccinylase (375 aa).

Histidine 66 contributes to the Zn(2+) binding site. Residue aspartate 68 is part of the active site. Zn(2+) is bound at residue aspartate 99. Residue glutamate 133 is the Proton acceptor of the active site. The Zn(2+) site is built by glutamate 134, glutamate 162, and histidine 348.

It belongs to the peptidase M20A family. DapE subfamily. Homodimer. It depends on Zn(2+) as a cofactor. The cofactor is Co(2+).

It catalyses the reaction N-succinyl-(2S,6S)-2,6-diaminopimelate + H2O = (2S,6S)-2,6-diaminopimelate + succinate. It functions in the pathway amino-acid biosynthesis; L-lysine biosynthesis via DAP pathway; LL-2,6-diaminopimelate from (S)-tetrahydrodipicolinate (succinylase route): step 3/3. Catalyzes the hydrolysis of N-succinyl-L,L-diaminopimelic acid (SDAP), forming succinate and LL-2,6-diaminopimelate (DAP), an intermediate involved in the bacterial biosynthesis of lysine and meso-diaminopimelic acid, an essential component of bacterial cell walls. In Yersinia enterocolitica serotype O:8 / biotype 1B (strain NCTC 13174 / 8081), this protein is Succinyl-diaminopimelate desuccinylase.